Consider the following 60-residue polypeptide: Large ribosomal subunit protein bL32 (60 aa).

Positions 1–60 (MAVQQNKKSPSKRGMHRSHDALTNPPLAIEPTTGETHLRHHISPNGFYRGKKVIKTKNDD) are disordered. Residues 49–60 (RGKKVIKTKNDD) show a composition bias toward basic residues.

Belongs to the bacterial ribosomal protein bL32 family.

This Nitrosomonas eutropha (strain DSM 101675 / C91 / Nm57) protein is Large ribosomal subunit protein bL32.